A 299-amino-acid polypeptide reads, in one-letter code: MFRGSIPPLPTPFRRGRLDEEALRRLVERVVQGGSHGVSVGGTTGEPGTQTLEERKRAIEVVLDQVAGRVPVIPGTGALRLEETLELTRFAKEAGAQGAMVIVPYYVKPNQEGLYRYFAEVARAVPDFPLLIYNIPGRAGVEIAPKTVGRLRRDFPNIVGLKHSSKDLEYLSHLFLEAGRDFLVFCGLESLTLPMMSLGAVGTIAATANWLPKEVALLCEKALAGDYQGARELHFYLLEANEAIFWDTNPIPLKTVLSWMGLLEKEWRPPLGPTTPEVEERLRRMAERYGLLPKEKEAA.

Thr44 serves as a coordination point for pyruvate. Tyr133 acts as the Proton donor/acceptor in catalysis. Lys162 serves as the catalytic Schiff-base intermediate with substrate. Ile204 contributes to the pyruvate binding site.

This sequence belongs to the DapA family. Homotetramer; dimer of dimers.

It is found in the cytoplasm. It carries out the reaction L-aspartate 4-semialdehyde + pyruvate = (2S,4S)-4-hydroxy-2,3,4,5-tetrahydrodipicolinate + H2O + H(+). It functions in the pathway amino-acid biosynthesis; L-lysine biosynthesis via DAP pathway; (S)-tetrahydrodipicolinate from L-aspartate: step 3/4. Its function is as follows. Catalyzes the condensation of (S)-aspartate-beta-semialdehyde [(S)-ASA] and pyruvate to 4-hydroxy-tetrahydrodipicolinate (HTPA). This is 4-hydroxy-tetrahydrodipicolinate synthase from Thermus thermophilus (strain ATCC BAA-163 / DSM 7039 / HB27).